Reading from the N-terminus, the 152-residue chain is UPF0225 protein YchJ (152 aa).

It belongs to the UPF0225 family.

This chain is UPF0225 protein YchJ, found in Salmonella gallinarum (strain 287/91 / NCTC 13346).